The primary structure comprises 204 residues: Ciliary microtubule inner protein 7 (204 aa).

It is found in the cell projection. Its subcellular location is the cilium. The sequence is that of Ciliary microtubule inner protein 7 from Homo sapiens (Human).